Consider the following 95-residue polypeptide: Putative pterin-4-alpha-carbinolamine dehydratase (95 aa).

Belongs to the pterin-4-alpha-carbinolamine dehydratase family.

The enzyme catalyses (4aS,6R)-4a-hydroxy-L-erythro-5,6,7,8-tetrahydrobiopterin = (6R)-L-erythro-6,7-dihydrobiopterin + H2O. In Solibacter usitatus (strain Ellin6076), this protein is Putative pterin-4-alpha-carbinolamine dehydratase.